A 449-amino-acid polypeptide reads, in one-letter code: Phosphoglucosamine mutase (449 aa).

The Phosphoserine intermediate role is filled by Ser100. Mg(2+) is bound by residues Ser100, Asp241, Asp243, and Asp245. Ser100 is modified (phosphoserine).

Belongs to the phosphohexose mutase family. The cofactor is Mg(2+). Post-translationally, activated by phosphorylation.

It catalyses the reaction alpha-D-glucosamine 1-phosphate = D-glucosamine 6-phosphate. Its function is as follows. Catalyzes the conversion of glucosamine-6-phosphate to glucosamine-1-phosphate. The sequence is that of Phosphoglucosamine mutase from Geobacillus kaustophilus (strain HTA426).